The primary structure comprises 120 residues: Large ribosomal subunit protein uL14 (120 aa).

Belongs to the universal ribosomal protein uL14 family. In terms of assembly, part of the 50S ribosomal subunit. Forms a cluster with proteins L3 and L19. In the 70S ribosome, L14 and L19 interact and together make contacts with the 16S rRNA in bridges B5 and B8.

Functionally, binds to 23S rRNA. Forms part of two intersubunit bridges in the 70S ribosome. In Dictyoglomus turgidum (strain DSM 6724 / Z-1310), this protein is Large ribosomal subunit protein uL14.